The following is a 586-amino-acid chain: Putative Lon protease homolog (586 aa).

Residues 346 to 543 (GERIGQINAL…TDALPLLLNL (198 aa)) enclose the Lon proteolytic domain. Residues serine 438 and lysine 481 contribute to the active site.

The protein belongs to the peptidase S16 family.

The chain is Putative Lon protease homolog (ycbZ) from Escherichia coli (strain K12).